The sequence spans 455 residues: Beta-1,3-galactosyl-O-glycosyl-glycoprotein beta-1,6-N-acetylglucosaminyltransferase 4 (455 aa).

The Cytoplasmic portion of the chain corresponds to 1-13 (MKIFRCCFKYTLQ). The chain crosses the membrane as a helical; Signal-anchor for type II membrane protein span at residues 14 to 34 (QKLFILLLTLWLFSLLKLLNV). Residues 35 to 455 (GRLLFPQRDI…TEGTRQSHTL (421 aa)) lie on the Lumenal side of the membrane. An N-linked (GlcNAc...) asparagine glycan is attached at N73. 4 disulfide bridges follow: C74-C228, C162-C383, C183-C210, and C392-C424. N287 and N382 each carry an N-linked (GlcNAc...) asparagine glycan.

It belongs to the glycosyltransferase 14 family.

The protein resides in the golgi apparatus membrane. It catalyses the reaction a 3-O-[beta-D-galactosyl-(1-&gt;3)-N-acetyl-alpha-D-galactosaminyl]-L-seryl-[protein] + UDP-N-acetyl-alpha-D-glucosamine = 3-O-{beta-D-galactosyl-(1-&gt;3)-[N-acetyl-beta-D-glucosaminyl-(1-&gt;6)]-N-acetyl-alpha-D-galactosaminyl}-L-seryl-[protein] + UDP + H(+). The catalysed reaction is a 3-O-[beta-D-galactosyl-(1-&gt;3)-N-acetyl-alpha-D-galactosaminyl]-L-threonyl-[protein] + UDP-N-acetyl-alpha-D-glucosamine = a 3-O-{beta-D-galactosyl-(1-&gt;3)-[N-acetyl-beta-D-glucosaminyl-(1-&gt;6)]-N-acetyl-alpha-D-galactosaminyl}-L-threonyl-[protein] + UDP + H(+). It functions in the pathway protein modification; protein glycosylation. Its function is as follows. Glycosyltransferase that mediates core 2 O-glycan branching, an important step in mucin-type biosynthesis. Does not have core 4 O-glycan or I-branching enzyme activity. This Mus musculus (Mouse) protein is Beta-1,3-galactosyl-O-glycosyl-glycoprotein beta-1,6-N-acetylglucosaminyltransferase 4 (Gcnt4).